Consider the following 396-residue polypeptide: L-aspartate--glyoxylate aminotransferase (396 aa).

At K196 the chain carries N6-(pyridoxal phosphate)lysine.

It belongs to the class-V pyridoxal-phosphate-dependent aminotransferase family. The cofactor is pyridoxal 5'-phosphate.

The enzyme catalyses oxaloacetate + glycine = glyoxylate + L-aspartate. Functionally, catalyzes the transamination of glyoxylate into glycine using L-aspartate as the preferred amino group donor. Is essential for the growth of P.denitrificans in the presence of glycolate and glyoxylate since it functions in glyoxylate assimilation via the beta-hydroxyaspartate cycle (BHAC). Can catalyze the reverse reaction in vitro, and also use L-serine and L-glutamate as amino group donor, but with much less efficiency than L-aspartate. The protein is L-aspartate--glyoxylate aminotransferase of Paracoccus denitrificans (strain Pd 1222).